The following is a 246-amino-acid chain: Protein crossbronx (246 aa).

One can recognise a UBC core domain in the interval 20-177; it reads QQEYKILAEY…VQESILESKA (158 aa).

It belongs to the ubiquitin-conjugating enzyme family. FTS subfamily.

This chain is Protein crossbronx (cbx), found in Drosophila grimshawi (Hawaiian fruit fly).